A 936-amino-acid chain; its full sequence is Isoleucine--tRNA ligase (936 aa).

Positions 58 to 68 (PYANGRAHLGT) match the 'HIGH' region motif. E561 contacts L-isoleucyl-5'-AMP. Positions 602–606 (KMSKS) match the 'KMSKS' region motif. K605 provides a ligand contact to ATP. Zn(2+) contacts are provided by C899, C902, C919, and C922.

The protein belongs to the class-I aminoacyl-tRNA synthetase family. IleS type 1 subfamily. Monomer. Zn(2+) is required as a cofactor.

It localises to the cytoplasm. It carries out the reaction tRNA(Ile) + L-isoleucine + ATP = L-isoleucyl-tRNA(Ile) + AMP + diphosphate. Functionally, catalyzes the attachment of isoleucine to tRNA(Ile). As IleRS can inadvertently accommodate and process structurally similar amino acids such as valine, to avoid such errors it has two additional distinct tRNA(Ile)-dependent editing activities. One activity is designated as 'pretransfer' editing and involves the hydrolysis of activated Val-AMP. The other activity is designated 'posttransfer' editing and involves deacylation of mischarged Val-tRNA(Ile). This chain is Isoleucine--tRNA ligase, found in Coxiella burnetii (strain CbuK_Q154) (Coxiella burnetii (strain Q154)).